The primary structure comprises 330 residues: Aspartate--ammonia ligase (330 aa).

The protein belongs to the class-II aminoacyl-tRNA synthetase family. AsnA subfamily.

Its subcellular location is the cytoplasm. It catalyses the reaction L-aspartate + NH4(+) + ATP = L-asparagine + AMP + diphosphate + H(+). It participates in amino-acid biosynthesis; L-asparagine biosynthesis; L-asparagine from L-aspartate (ammonia route): step 1/1. The polypeptide is Aspartate--ammonia ligase (Streptococcus agalactiae serotype Ia (strain ATCC 27591 / A909 / CDC SS700)).